The following is a 137-amino-acid chain: Large ribosomal subunit protein uL16 (137 aa).

Belongs to the universal ribosomal protein uL16 family. In terms of assembly, part of the 50S ribosomal subunit.

Its function is as follows. Binds 23S rRNA and is also seen to make contacts with the A and possibly P site tRNAs. The sequence is that of Large ribosomal subunit protein uL16 from Xanthomonas campestris pv. campestris (strain 8004).